A 199-amino-acid polypeptide reads, in one-letter code: Recombination protein RecR (199 aa).

A C4-type zinc finger spans residues 58–73 (CKKCFNLTSEDECEIC). The region spanning 81–175 (KLICVVSETK…KVTRIAYGLP (95 aa)) is the Toprim domain.

The protein belongs to the RecR family.

In terms of biological role, may play a role in DNA repair. It seems to be involved in an RecBC-independent recombinational process of DNA repair. It may act with RecF and RecO. In Prochlorococcus marinus (strain AS9601), this protein is Recombination protein RecR.